The sequence spans 377 residues: Chaperone protein DnaJ (377 aa).

The J domain maps to 5-70 (DYYEVLGVAK…QKRAAYDRYG (66 aa)). The CR-type zinc finger occupies 137–215 (GFDTEIRVPS…CDGVGRTRRN (79 aa)). Positions 150, 153, 167, 170, 189, 192, 203, and 206 each coordinate Zn(2+). CXXCXGXG motif repeat units follow at residues 150–157 (CDTCHGSG), 167–174 (CRTCGGSG), 189–196 (CPTCHGTG), and 203–210 (CPSCDGVG).

It belongs to the DnaJ family. In terms of assembly, homodimer. It depends on Zn(2+) as a cofactor.

The protein localises to the cytoplasm. Functionally, participates actively in the response to hyperosmotic and heat shock by preventing the aggregation of stress-denatured proteins and by disaggregating proteins, also in an autonomous, DnaK-independent fashion. Unfolded proteins bind initially to DnaJ; upon interaction with the DnaJ-bound protein, DnaK hydrolyzes its bound ATP, resulting in the formation of a stable complex. GrpE releases ADP from DnaK; ATP binding to DnaK triggers the release of the substrate protein, thus completing the reaction cycle. Several rounds of ATP-dependent interactions between DnaJ, DnaK and GrpE are required for fully efficient folding. Also involved, together with DnaK and GrpE, in the DNA replication of plasmids through activation of initiation proteins. In Bordetella parapertussis (strain 12822 / ATCC BAA-587 / NCTC 13253), this protein is Chaperone protein DnaJ.